Here is a 229-residue protein sequence, read N- to C-terminus: Protein-L-isoaspartate O-methyltransferase (229 aa).

The active site involves S74.

The protein belongs to the methyltransferase superfamily. L-isoaspartyl/D-aspartyl protein methyltransferase family.

It localises to the cytoplasm. It catalyses the reaction [protein]-L-isoaspartate + S-adenosyl-L-methionine = [protein]-L-isoaspartate alpha-methyl ester + S-adenosyl-L-homocysteine. In terms of biological role, catalyzes the methyl esterification of L-isoaspartyl residues in peptides and proteins that result from spontaneous decomposition of normal L-aspartyl and L-asparaginyl residues. It plays a role in the repair and/or degradation of damaged proteins. In Pelotomaculum thermopropionicum (strain DSM 13744 / JCM 10971 / SI), this protein is Protein-L-isoaspartate O-methyltransferase.